A 617-amino-acid polypeptide reads, in one-letter code: Probable potassium transport system protein Kup 3 (617 aa).

11 helical membrane passes run 42 to 62, 95 to 115, 129 to 149, 160 to 180, 206 to 226, 240 to 260, 282 to 302, 330 to 350, 360 to 380, 386 to 406, and 411 to 431; these read VASLILWALLLIISLKYALLI, LVVGLVGAALLYGDGAITPAI, PSLAPAVVPVTVVILVGLFMM, IFGPVMLAWFAVLAALGIHGI, VSFAILGAAFLAVTGGEAMYA, WFAICLPALVLNYFGQAALLI, LVAFSAVATVIASQAIISGVF, IYVPLVNWLLAAATLGAVLSF, YGIAVSLLMAITTLLAALVAI, PWLVVAVNGAFFVIDVIFFSA, and LFEGGWFPLLLAALVAFMMLT.

This sequence belongs to the HAK/KUP transporter (TC 2.A.72) family.

It localises to the cell inner membrane. It catalyses the reaction K(+)(in) + H(+)(in) = K(+)(out) + H(+)(out). In terms of biological role, transport of potassium into the cell. Likely operates as a K(+):H(+) symporter. The polypeptide is Probable potassium transport system protein Kup 3 (Bradyrhizobium diazoefficiens (strain JCM 10833 / BCRC 13528 / IAM 13628 / NBRC 14792 / USDA 110)).